We begin with the raw amino-acid sequence, 292 residues long: 2-(5''-triphosphoribosyl)-3'-dephosphocoenzyme-A synthase (292 aa).

The protein belongs to the CitG/MdcB family.

It carries out the reaction 3'-dephospho-CoA + ATP = 2'-(5''-triphospho-alpha-D-ribosyl)-3'-dephospho-CoA + adenine. Catalyzes the formation of 2-(5''-triphosphoribosyl)-3'-dephosphocoenzyme-A, the precursor of the prosthetic group of the holo-acyl carrier protein (gamma chain) of citrate lyase, from ATP and dephospho-CoA. The polypeptide is 2-(5''-triphosphoribosyl)-3'-dephosphocoenzyme-A synthase (Escherichia coli O7:K1 (strain IAI39 / ExPEC)).